A 928-amino-acid polypeptide reads, in one-letter code: G-protein coupled receptor family C group 6 member A (928 aa).

An N-terminal signal peptide occupies residues 1 to 20 (MALSFVFITCFMILLDTSQS). Over 21 to 594 (CHTPDDFVAI…EYLDWDDSLA (574 aa)) the chain is Extracellular. N-linked (GlcNAc...) asparagine glycans are attached at residues asparagine 332 and asparagine 555. Residues 595-615 (LLLIALSLLGIAFVLAVGIIF) traverse the membrane as a helical segment. The Cytoplasmic portion of the chain corresponds to 616-630 (TRNLKTPVVKSSGGL). A helical transmembrane segment spans residues 631–651 (VVCYVMLACHALNFASTGFFI). The Extracellular segment spans residues 652–669 (GEPQDFTCKTRQTLFGVS). The helical transmembrane segment at 670–690 (FTLCVSCILTKSLKILLAFSF) threads the bilayer. At 691-706 (DPTLKTFLKCLYRPVP) the chain is on the cytoplasmic side. A helical transmembrane segment spans residues 707 to 727 (IVLTCTGIQVVICTLWLVLAA). Topologically, residues 728 to 750 (PTVEENTSLPRVIILECEEGSAL) are extracellular. Residues 751-771 (AFGTMLGYIAVLAFICFVFAF) form a helical membrane-spanning segment. The Cytoplasmic portion of the chain corresponds to 772–784 (KGRKLPENYNEAK). Residues 785 to 805 (FLTFGMLIYFIAWITFIPVYA) form a helical membrane-spanning segment. The Extracellular segment spans residues 806–812 (TTFGKYL). Residues 813–833 (PAVEIIVILISNYGILCCTFF) form a helical membrane-spanning segment. Residues 834–928 (PKCYIILCKQ…TLHQKRSSSI (95 aa)) lie on the Cytoplasmic side of the membrane.

The protein belongs to the G-protein coupled receptor 3 family. In terms of assembly, homodimer; disulfide-linked. In terms of processing, N-glycosylated. In terms of tissue distribution, high expression in soft palate. Weak expression in kidney, liver, lung and brain. No expression detected in heart, testis, skeletal muscle amd spleen.

The protein resides in the cell membrane. Functionally, receptor activated by multiple ligands, including osteocalcin (BGLAP), basic amino acids, and various cations. Activated by amino acids with a preference for basic amino acids such as L-Lys, L-Arg and L-ornithine but also by small and polar amino acids. The L-alpha amino acids respond is augmented by divalent cations Ca(2+) and Mg(2+). Seems to act through a G(q)/G(11) and G(i)-coupled pathway. Regulates testosterone production by acting as a ligand for uncarboxylated osteocalcin hormone: osteocalcin-binding at the surface of Leydig cells initiates a signaling response that promotes the expression of enzymes required for testosterone synthesis in a CREB-dependent manner. Mediates the non-genomic effects of androgens in multiple tissue. May coordinate nutritional and hormonal anabolic signals through the sensing of extracellular amino acids, osteocalcin, divalent ions and its responsiveness to anabolic steroids. This Rattus norvegicus (Rat) protein is G-protein coupled receptor family C group 6 member A (Gprc6a).